The sequence spans 413 residues: Imidazolonepropionase (413 aa).

Fe(3+)-binding residues include His79 and His81. 2 residues coordinate Zn(2+): His79 and His81. 4-imidazolone-5-propanoate is bound by residues Arg88, Tyr151, and His184. Tyr151 provides a ligand contact to N-formimidoyl-L-glutamate. Fe(3+) is bound at residue His248. Residue His248 participates in Zn(2+) binding. Glu251 contributes to the 4-imidazolone-5-propanoate binding site. Residue Asp322 participates in Fe(3+) binding. Asp322 is a Zn(2+) binding site. N-formimidoyl-L-glutamate is bound by residues Asn324 and Gly326. Residue Ser327 participates in 4-imidazolone-5-propanoate binding.

The protein belongs to the metallo-dependent hydrolases superfamily. HutI family. It depends on Zn(2+) as a cofactor. Fe(3+) is required as a cofactor.

It is found in the cytoplasm. It catalyses the reaction 4-imidazolone-5-propanoate + H2O = N-formimidoyl-L-glutamate. Its pathway is amino-acid degradation; L-histidine degradation into L-glutamate; N-formimidoyl-L-glutamate from L-histidine: step 3/3. In terms of biological role, catalyzes the hydrolytic cleavage of the carbon-nitrogen bond in imidazolone-5-propanoate to yield N-formimidoyl-L-glutamate. It is the third step in the universal histidine degradation pathway. This is Imidazolonepropionase from Fusobacterium nucleatum subsp. nucleatum (strain ATCC 25586 / DSM 15643 / BCRC 10681 / CIP 101130 / JCM 8532 / KCTC 2640 / LMG 13131 / VPI 4355).